Here is a 212-residue protein sequence, read N- to C-terminus: uncharacterized protein (212 aa).

The N-terminal stretch at 1 to 18 is a signal peptide; that stretch reads MIPLVALLVLLTLQASPG. Residues 186–208 form a helical membrane-spanning segment; it reads IYRLATFFMVSLFVGSFVALVFV.

This sequence to A.fulgidus AF_0540.

The protein resides in the membrane. This is an uncharacterized protein from Archaeoglobus fulgidus (strain ATCC 49558 / DSM 4304 / JCM 9628 / NBRC 100126 / VC-16).